Reading from the N-terminus, the 1279-residue chain is Sterol regulatory element-binding protein cleavage-activating protein (1279 aa).

Over methionine 1–histidine 18 the chain is Cytoplasmic. Residues glycine 19–alanine 39 traverse the membrane as a helical segment. Topologically, residues cysteine 40–glutamate 279 are lumenal. The tract at residues lysine 46–glutamate 284 is loop-1. The segment at proline 60 to glutamate 80 is disordered. Asparagine 263 carries an N-linked (GlcNAc...) asparagine glycan. Residues isoleucine 280–tyrosine 300 form a helical membrane-spanning segment. The 159-residue stretch at glutamate 284–isoleucine 442 folds into the SSD domain. Topologically, residues phenylalanine 301–lysine 312 are cytoplasmic. A helical transmembrane segment spans residues tryptophan 313–leucine 333. Residues cysteine 334–asparagine 344 lie on the Lumenal side of the membrane. Residues glycine 345 to threonine 365 form a helical membrane-spanning segment. Over lysine 366 to glycine 401 the chain is Cytoplasmic. The chain crosses the membrane as a helical span at residues isoleucine 402–valine 422. Valine 423 is a topological domain (lumenal). A helical membrane pass occupies residues glycine 424–isoleucine 444. Topologically, residues arginine 445–arginine 518 are cytoplasmic. An ER export signal motif is present at residues methionine 447–leucine 452. Glycyl lysine isopeptide (Lys-Gly) (interchain with G-Cter in ubiquitin) cross-links involve residues lysine 454 and lysine 466. Residues leucine 519 to leucine 539 form a helical membrane-spanning segment. The loop-7 stretch occupies residues aspartate 535–lysine 710. At arginine 540–tyrosine 709 the chain is on the lumenal side. Residues isoleucine 579–valine 615 form a disordered region. Residues asparagine 590 and asparagine 641 are each glycosylated (N-linked (GlcNAc...) asparagine). The segment at glutamate 668–glycine 696 is disordered. The chain crosses the membrane as a helical span at residues lysine 710–tyrosine 730. At arginine 731–aspartate 1279 the chain is on the cytoplasmic side. The tract at residues arginine 731–aspartate 1279 is interaction with SREBF2. Residues valine 771–arginine 811 form a WD 1 repeat. Positions arginine 811–serine 904 are disordered. Phosphoserine occurs at positions 822, 838, and 851. The span at isoleucine 877–threonine 891 shows a compositional bias: polar residues. A phosphoserine mark is found at serine 907 and serine 937. The segment at proline 931–tryptophan 962 is disordered. 2 WD repeats span residues serine 952 to serine 1002 and glutamate 1005 to proline 1042. Arginine 1051 is modified (omega-N-methylarginine). WD repeat units lie at residues alanine 1077–threonine 1114, glycine 1117–histidine 1155, alanine 1158–serine 1195, and glutamine 1197–threonine 1235.

It belongs to the WD repeat SCAP family. Membrane region forms a homotetramer. Component of the SCAP-SREBP complex (composed of SCAP and SREBF1/SREBP1 or SREBF2/SREBP2); interacts with SREBF1/SREBP1 or SREBF2/SREBP2 through its C-terminal cytoplasmic domain. Forms a ternary complex with INSIG1 or INSIG2 through its transmembrane domains at high sterol concentrations. Interacts with PAQR3; the interaction anchors the SCAP-SREBP complex to the Golgi apparatus in low cholesterol conditions. Interacts with the SEC23-SEC24 complex in a SAR1-GTP-dependent manner through an ER export signal in its third cytoplasmic loop. Interacts with RNF139; the interaction inhibits the interaction of SCAP with SEC24B and hampering the ER to Golgi transport of the SCAP-SREBP complex. Interacts with SPRING1. Post-translationally, ubiquitinated at Lys-454 and Lys-466. RNF145 triggers ubiquitination of SCAP, likely inhibiting SCAP-SREBP complex transport to the Golgi apparatus and the subsequent processing/maturation of SREBF2/SREBP2.

The protein localises to the endoplasmic reticulum membrane. Its subcellular location is the golgi apparatus membrane. The protein resides in the cytoplasmic vesicle. It localises to the COPII-coated vesicle membrane. Its function is as follows. Escort protein required for cholesterol as well as lipid homeostasis. Regulates export of the SCAP-SREBP complex from the endoplasmic reticulum to the Golgi upon low cholesterol, thereby regulating the processing of sterol regulatory element-binding proteins (SREBPs) SREBF1/SREBP1 and SREBF2/SREBP2. At high sterol concentrations, formation of a ternary complex with INSIG (INSIG1 or INSIG2) leads to mask the ER export signal in SCAP, promoting retention of the complex in the endoplasmic reticulum. Low sterol concentrations trigger release of INSIG, a conformational change in the SSD domain of SCAP, unmasking of the ER export signal, promoting recruitment into COPII-coated vesicles and transport of the SCAP-SREBP to the Golgi: in the Golgi, SREBPs are then processed, releasing the transcription factor fragment of SREBPs from the membrane, its import into the nucleus and up-regulation of LDLR, INSIG1 and the mevalonate pathway. Binds cholesterol via its SSD domain. This is Sterol regulatory element-binding protein cleavage-activating protein from Homo sapiens (Human).